Here is a 262-residue protein sequence, read N- to C-terminus: ATP synthase subunit delta (262 aa).

This sequence belongs to the ATPase delta chain family. In terms of assembly, F-type ATPases have 2 components, F(1) - the catalytic core - and F(0) - the membrane proton channel. F(1) has five subunits: alpha(3), beta(3), gamma(1), delta(1), epsilon(1). F(0) has three main subunits: a(1), b(2) and c(10-14). The alpha and beta chains form an alternating ring which encloses part of the gamma chain. F(1) is attached to F(0) by a central stalk formed by the gamma and epsilon chains, while a peripheral stalk is formed by the delta and b chains.

It is found in the cell membrane. F(1)F(0) ATP synthase produces ATP from ADP in the presence of a proton or sodium gradient. F-type ATPases consist of two structural domains, F(1) containing the extramembraneous catalytic core and F(0) containing the membrane proton channel, linked together by a central stalk and a peripheral stalk. During catalysis, ATP synthesis in the catalytic domain of F(1) is coupled via a rotary mechanism of the central stalk subunits to proton translocation. Its function is as follows. This protein is part of the stalk that links CF(0) to CF(1). It either transmits conformational changes from CF(0) to CF(1) or is implicated in proton conduction. In Tropheryma whipplei (strain TW08/27) (Whipple's bacillus), this protein is ATP synthase subunit delta.